The sequence spans 486 residues: Protein DETOXIFICATION 27 (486 aa).

The disordered stretch occupies residues M1–E25. 12 helical membrane passes run L41–I61, L74–G94, I124–L144, I153–L173, V189–V209, V216–V236, G269–L289, L299–G319, I349–F369, L384–V404, G407–L427, and V439–I461.

This sequence belongs to the multi antimicrobial extrusion (MATE) (TC 2.A.66.1) family.

It is found in the membrane. The polypeptide is Protein DETOXIFICATION 27 (Arabidopsis thaliana (Mouse-ear cress)).